Reading from the N-terminus, the 241-residue chain is Homeobox protein TGIF2LX (241 aa).

Disordered stretches follow at residues 1-58 (MEAA…GNLP) and 126-209 (TGKD…VSPE). The segment covering 21-39 (AKTQSPAQDTSIMSRNNAD) has biased composition (polar residues). The homeobox; TALE-type DNA-binding region spans 48–111 (EHKKKRKGNL…INARRRILPD (64 aa)).

It belongs to the TALE/TGIF homeobox family.

It is found in the nucleus. In terms of biological role, may have a transcription role in testis. The sequence is that of Homeobox protein TGIF2LX (TGIF2LX) from Gorilla gorilla gorilla (Western lowland gorilla).